The sequence spans 237 residues: Orotidine 5'-phosphate decarboxylase (237 aa).

Substrate-binding positions include D11, K34, 61–70 (DLKLHDIPNT), T124, R186, Q195, G215, and R216. K63 acts as the Proton donor in catalysis.

The protein belongs to the OMP decarboxylase family. Type 1 subfamily. In terms of assembly, homodimer.

The enzyme catalyses orotidine 5'-phosphate + H(+) = UMP + CO2. The protein operates within pyrimidine metabolism; UMP biosynthesis via de novo pathway; UMP from orotate: step 2/2. Its function is as follows. Catalyzes the decarboxylation of orotidine 5'-monophosphate (OMP) to uridine 5'-monophosphate (UMP). The sequence is that of Orotidine 5'-phosphate decarboxylase from Lactococcus lactis subsp. lactis (strain IL1403) (Streptococcus lactis).